We begin with the raw amino-acid sequence, 461 residues long: Cysteine--tRNA ligase (461 aa).

Position 28 (cysteine 28) interacts with Zn(2+). The short motif at 30–40 (ITVYDLCHIGH) is the 'HIGH' region element. Zn(2+) is bound by residues cysteine 209, histidine 234, and glutamate 238. A 'KMSKS' region motif is present at residues 266–270 (KMSKS). Lysine 269 contacts ATP.

It belongs to the class-I aminoacyl-tRNA synthetase family. Monomer. Zn(2+) serves as cofactor.

The protein resides in the cytoplasm. The enzyme catalyses tRNA(Cys) + L-cysteine + ATP = L-cysteinyl-tRNA(Cys) + AMP + diphosphate. This chain is Cysteine--tRNA ligase, found in Shigella sonnei (strain Ss046).